The sequence spans 216 residues: Uracil phosphoribosyltransferase (216 aa).

GTP is bound by residues arginine 32, arginine 41, 75–78, and lysine 77; that span reads LGKI. 5-phospho-alpha-D-ribose 1-diphosphate is bound at residue arginine 85. Arginine 102 provides a ligand contact to GTP. Residue arginine 110 coordinates 5-phospho-alpha-D-ribose 1-diphosphate. Position 131 (arginine 131) interacts with GTP. 5-phospho-alpha-D-ribose 1-diphosphate is bound by residues aspartate 137 and 137-145; that span reads DPMLATGGS. Tyrosine 201 contributes to the D-ribose 5-phosphate binding site. Uracil is bound by residues leucine 202 and 207-209; that span reads GDF. Aspartate 208 lines the 5-phospho-alpha-D-ribose 1-diphosphate pocket.

It belongs to the UPRTase family. The cofactor is Mg(2+).

The catalysed reaction is UMP + diphosphate = 5-phospho-alpha-D-ribose 1-diphosphate + uracil. It participates in pyrimidine metabolism; UMP biosynthesis via salvage pathway; UMP from uracil: step 1/1. With respect to regulation, allosterically activated by GTP. Catalyzes the conversion of uracil and 5-phospho-alpha-D-ribose 1-diphosphate (PRPP) to UMP and diphosphate. The sequence is that of Uracil phosphoribosyltransferase (FUR1) from Lachancea kluyveri (Yeast).